We begin with the raw amino-acid sequence, 440 residues long: Exodeoxyribonuclease 7 large subunit (440 aa).

This sequence belongs to the XseA family. As to quaternary structure, heterooligomer composed of large and small subunits.

It is found in the cytoplasm. The catalysed reaction is Exonucleolytic cleavage in either 5'- to 3'- or 3'- to 5'-direction to yield nucleoside 5'-phosphates.. Its function is as follows. Bidirectionally degrades single-stranded DNA into large acid-insoluble oligonucleotides, which are then degraded further into small acid-soluble oligonucleotides. The sequence is that of Exodeoxyribonuclease 7 large subunit from Ralstonia nicotianae (strain ATCC BAA-1114 / GMI1000) (Ralstonia solanacearum).